The chain runs to 110 residues: Vacuolar ATPase assembly integral membrane protein VMA21 (110 aa).

Residues 1 to 28 (MTTRRIIGQDGEEKTYLDVDPRGPPGPS) are disordered. The Cytoplasmic segment spans residues 1–44 (MTTRRIIGQDGEEKTYLDVDPRGPPGPSNISPAVPASVIWKLMS). Residues 11 to 21 (GEEKTYLDVDP) are compositionally biased toward basic and acidic residues. Residues 45–65 (FTFAMITLPIGTYFFTVNYVF) traverse the membrane as a helical segment. The Lumenal segment spans residues 66-71 (GGNATY). The chain crosses the membrane as a helical span at residues 72 to 92 (AGALAAIMANVVLIAYVIMAF). Residues 93–110 (KDDQAEQAEDAREAKKEL) lie on the Cytoplasmic side of the membrane. Residues 107–110 (KKEL) carry the Prevents secretion from ER motif.

It belongs to the VMA21 family.

The protein resides in the endoplasmic reticulum membrane. Its subcellular location is the endoplasmic reticulum-Golgi intermediate compartment membrane. It is found in the cytoplasmic vesicle. The protein localises to the COPII-coated vesicle membrane. In terms of biological role, required for the assembly of the V0 complex of the vacuolar ATPase (V-ATPase) in the endoplasmic reticulum. This Phaeosphaeria nodorum (strain SN15 / ATCC MYA-4574 / FGSC 10173) (Glume blotch fungus) protein is Vacuolar ATPase assembly integral membrane protein VMA21.